The primary structure comprises 94 residues: uncharacterized protein (94 aa).

The protein belongs to the phage portal family. HK97 subfamily.

This is an uncharacterized protein from Rickettsia conorii (strain ATCC VR-613 / Malish 7).